A 94-amino-acid chain; its full sequence is Beta-diguetoxin-Dc1a (94 aa).

Residues 1–17 form the signal peptide; it reads MKVFVVLLCLSLAAVYA. The propeptide occupies 18 to 38; that stretch reads LEERLDKDADIMLDSPADMER. 4 disulfides stabilise this stretch: C50/C63, C57/C77, C62/C91, and C79/C89.

This sequence belongs to the neurotoxin 26 (DTX) family. In terms of tissue distribution, expressed by the venom gland.

The protein localises to the secreted. In terms of biological role, insecticidal toxin. This toxin promotes opening of insect Nav channels. The toxin binds to the S1-S2 and S3-S4 loops in the domain II voltage-sensor of insect Nav channels (i.e., receptor site 4). The American cockroach P.americana is largely resistant to the effects of this toxin due to an unusual sequence within the domain II S1-S2 loop. In vivo, paralyzes lepidopteran and dipteran larvae. Paralyzed insects ultimately die from secondary effects of starvation and dehydration. The sequence is that of Beta-diguetoxin-Dc1a from Diguetia canities (Desert bush spider).